A 235-amino-acid chain; its full sequence is REF/SRPP-like protein At2g47780 (235 aa).

Residues 1–12 are compositionally biased toward acidic residues; that stretch reads MAEDEIVVEEEQ. The tract at residues 1–32 is disordered; the sequence is MAEDEIVVEEEQSQPQEITPVPPSSSSSPSLV.

It belongs to the REF/SRPP family.

This is REF/SRPP-like protein At2g47780 from Arabidopsis thaliana (Mouse-ear cress).